The sequence spans 84 residues: DNA-directed RNA polymerase subunit Rpo5 (84 aa).

The protein belongs to the archaeal Rpo5/eukaryotic RPB5 RNA polymerase subunit family. In terms of assembly, part of the 13-subunit RNA polymerase complex.

The protein resides in the cytoplasm. It carries out the reaction RNA(n) + a ribonucleoside 5'-triphosphate = RNA(n+1) + diphosphate. DNA-dependent RNA polymerase (RNAP) catalyzes the transcription of DNA into RNA using the four ribonucleoside triphosphates as substrates. In Saccharolobus solfataricus (strain ATCC 35092 / DSM 1617 / JCM 11322 / P2) (Sulfolobus solfataricus), this protein is DNA-directed RNA polymerase subunit Rpo5.